We begin with the raw amino-acid sequence, 157 residues long: Ribosomal RNA large subunit methyltransferase H (157 aa).

Residues leucine 73, glycine 105, and 124–129 (LSKMTF) each bind S-adenosyl-L-methionine.

Belongs to the RNA methyltransferase RlmH family. As to quaternary structure, homodimer.

The protein resides in the cytoplasm. It carries out the reaction pseudouridine(1915) in 23S rRNA + S-adenosyl-L-methionine = N(3)-methylpseudouridine(1915) in 23S rRNA + S-adenosyl-L-homocysteine + H(+). In terms of biological role, specifically methylates the pseudouridine at position 1915 (m3Psi1915) in 23S rRNA. The chain is Ribosomal RNA large subunit methyltransferase H from Parabacteroides distasonis (strain ATCC 8503 / DSM 20701 / CIP 104284 / JCM 5825 / NCTC 11152).